Here is a 202-residue protein sequence, read N- to C-terminus: Peptidyl-tRNA hydrolase (202 aa).

Residue tyrosine 19 participates in tRNA binding. The active-site Proton acceptor is histidine 24. 3 residues coordinate tRNA: tyrosine 70, asparagine 72, and asparagine 118.

Belongs to the PTH family. As to quaternary structure, monomer.

Its subcellular location is the cytoplasm. It carries out the reaction an N-acyl-L-alpha-aminoacyl-tRNA + H2O = an N-acyl-L-amino acid + a tRNA + H(+). Functionally, hydrolyzes ribosome-free peptidyl-tRNAs (with 1 or more amino acids incorporated), which drop off the ribosome during protein synthesis, or as a result of ribosome stalling. Catalyzes the release of premature peptidyl moieties from peptidyl-tRNA molecules trapped in stalled 50S ribosomal subunits, and thus maintains levels of free tRNAs and 50S ribosomes. This chain is Peptidyl-tRNA hydrolase, found in Prochlorococcus marinus (strain NATL2A).